The following is a 220-amino-acid chain: Putative vesicle-associated membrane protein 726 (220 aa).

Residues 1-196 (MGQQSLIYSF…LWFENMKIKL (196 aa)) lie on the Cytoplasmic side of the membrane. Residues 10–114 (FVARGTVILA…SLNKEFGSKL (105 aa)) enclose the Longin domain. The region spanning 130–190 (KLSKVKAQVT…TKMKRKLWFE (61 aa)) is the v-SNARE coiled-coil homology domain. Residues 197–217 (IVFGIIVALILIIILSVCHGF) traverse the membrane as a helical; Anchor for type IV membrane protein segment. Residues 218-220 (KCT) lie on the Vesicular side of the membrane.

The protein belongs to the synaptobrevin family. In terms of tissue distribution, expressed in flowers, leaves, stems and roots.

It is found in the cell membrane. The protein resides in the early endosome membrane. Involved in the targeting and/or fusion of transport vesicles to their target membrane. In Arabidopsis thaliana (Mouse-ear cress), this protein is Putative vesicle-associated membrane protein 726 (VAMP726).